A 340-amino-acid polypeptide reads, in one-letter code: MSFQSMASIAEAAREVAAASDLNTLEQIRLRWLGRKGVLTEAMQQLGQLSPETRREAGQLLNERKSEIQSLLQERKAELEAAAIHARLQQERLDVTLPGRREACGSAHPIRQTLEWIEHYFFGLGFETSDGPEIEDDYHNFAALNIPEDHPARAMHDTFYLDATRLLRTQTSTVQIRFLESHQPPLRMIATGRVYRRDSDITHTPMFHQVEGLLLDERASFADLRGLLSDFLHGFFAKPDLPVRFRPSYFPFTEPSAEIDIGCVICGGSGCRVCKQTGWLEVLGCGMVHPAVLAGAGVDGERFSGFAFGMGVERLTMLRYGVNDLRLFFENDLRFLKQFS.

Residue Glu-254 coordinates Mg(2+).

It belongs to the class-II aminoacyl-tRNA synthetase family. Phe-tRNA synthetase alpha subunit type 1 subfamily. Tetramer of two alpha and two beta subunits. Mg(2+) serves as cofactor.

It is found in the cytoplasm. The enzyme catalyses tRNA(Phe) + L-phenylalanine + ATP = L-phenylalanyl-tRNA(Phe) + AMP + diphosphate + H(+). In Acidithiobacillus ferrooxidans (strain ATCC 23270 / DSM 14882 / CIP 104768 / NCIMB 8455) (Ferrobacillus ferrooxidans (strain ATCC 23270)), this protein is Phenylalanine--tRNA ligase alpha subunit.